A 67-amino-acid polypeptide reads, in one-letter code: UPF0434 protein Patl_1782 (67 aa).

This sequence belongs to the UPF0434 family.

In Pseudoalteromonas atlantica (strain T6c / ATCC BAA-1087), this protein is UPF0434 protein Patl_1782.